The primary structure comprises 465 residues: ATP synthase subunit beta (465 aa).

Residue 152–159 (GGAGVGKT) coordinates ATP.

This sequence belongs to the ATPase alpha/beta chains family. F-type ATPases have 2 components, CF(1) - the catalytic core - and CF(0) - the membrane proton channel. CF(1) has five subunits: alpha(3), beta(3), gamma(1), delta(1), epsilon(1). CF(0) has three main subunits: a(1), b(2) and c(9-12). The alpha and beta chains form an alternating ring which encloses part of the gamma chain. CF(1) is attached to CF(0) by a central stalk formed by the gamma and epsilon chains, while a peripheral stalk is formed by the delta and b chains.

The protein resides in the cell inner membrane. It carries out the reaction ATP + H2O + 4 H(+)(in) = ADP + phosphate + 5 H(+)(out). Functionally, produces ATP from ADP in the presence of a proton gradient across the membrane. The catalytic sites are hosted primarily by the beta subunits. This Campylobacter fetus subsp. fetus (strain 82-40) protein is ATP synthase subunit beta.